The chain runs to 395 residues: Prostaglandin D2 receptor 2 (395 aa).

The Extracellular segment spans residues 1 to 33 (MSANATLKPLCPILEQMSRLQSHSNTSIRYIDH). N-linked (GlcNAc...) asparagine glycosylation is found at N4 and N25. Residues 34–56 (AAVLLHGLASLLGLVENGVILFV) form a helical membrane-spanning segment. The Cytoplasmic segment spans residues 57 to 67 (VGCRMRQTVVT). Residues 68–89 (TWVLHLALSDLLASASLPFFTY) traverse the membrane as a helical segment. Over 90 to 106 (FLAVGHSWELGTTFCKL) the chain is Extracellular. C104 and C182 form a disulfide bridge. The chain crosses the membrane as a helical span at residues 107–127 (HSSIFFLNMFASGFLLSAISL). Over 128–146 (DRCLQVVRPVWAQNHRTVA) the chain is Cytoplasmic. The helical transmembrane segment at 147–168 (AAHKVCLVLWALAVLNTVPYFV) threads the bilayer. Residues 169–210 (FRDTISRLDGRIMCYYNVLLLNPGPDRDATCNSRQVALAVSK) lie on the Extracellular side of the membrane. The chain crosses the membrane as a helical span at residues 211–231 (FLLAFLVPLAIIASSHAAVSL). Residues 232–247 (RLQHRGRRRPGRFVRL) are Cytoplasmic-facing. The helical transmembrane segment at 248 to 269 (VAAVVAAFALCWGPYHVFSLLE) threads the bilayer. Residues 270–288 (ARAHANPGLRPLVWRGLPF) lie on the Extracellular side of the membrane. Residues 289-308 (VTSLAFFNSVANPVLYVLTC) form a helical membrane-spanning segment. The Cytoplasmic segment spans residues 309–395 (PDMLRKLRRS…LNRALSSTSS (87 aa)). An Involved in the recycling of CRTH2 motif is present at residues 330 to 333 (DSEL). Phosphoserine occurs at positions 331 and 345. Residues 333 to 363 (LGGAGSSRRRRTSSTARSASPLALCSRPEEP) form a disordered region.

The protein belongs to the G-protein coupled receptor 1 family. Post-translationally, phosphorylated. In terms of tissue distribution, widespread expression. High expression in stomach, small intestine, heart and thymus. Intermediate expression in colon, spinal cord and peripheral blood and low expression in brain, skeletal muscle and spleen. Expressed also on Th2- and Tc2- type cells, eosinophils and basophils.

The protein resides in the cell membrane. Functionally, receptor for prostaglandin D2 (PGD2). Coupled to the G(i)-protein. Receptor activation may result in pertussis toxin-sensitive decreases in cAMP levels and Ca(2+) mobilization. PI3K signaling is also implicated in mediating PTGDR2 effects. PGD2 induced receptor internalization. CRTH2 internalization can be regulated by diverse kinases such as, PKC, PKA, GRK2, GPRK5/GRK5 and GRK6. Receptor activation is responsible, at least in part, in immune regulation and allergic/inflammation responses. The protein is Prostaglandin D2 receptor 2 (PTGDR2) of Homo sapiens (Human).